Here is a 1247-residue protein sequence, read N- to C-terminus: ABC transporter B family member 14 (1247 aa).

The ABC transmembrane type-1 1 domain occupies 48–337 (MFLGGLGTCI…AVPSLSAISK (290 aa)). The next 6 helical transmembrane spans lie at 49 to 69 (FLGGLGTCIHGGTLPLFFVFF), 95 to 115 (LYLVYLGLVNLVSAWIGVACW), 172 to 192 (HVLRYLCQFIAGFVIGFLSVW), 196 to 216 (LLTLGVVPLIAIAGGGYAIVM), 277 to 297 (LGVGLTYSLLFCAWALLFWYA), and 315 to 335 (ILNVIYSGFALGQAVPSLSAI). Asparagine 362 and asparagine 392 each carry an N-linked (GlcNAc...) asparagine glycan. The ABC transporter 1 domain occupies 373-608 (IEFCGVSFAY…GGDYATLVNC (236 aa)). 407-414 (GPSGSGKS) provides a ligand contact to ATP. The ABC transmembrane type-1 2 domain maps to 679 to 971 (EWLYALLGSI…TLALTPDIVK (293 aa)). 2 consecutive transmembrane segments (helical) span residues 680–700 (WLYALLGSIGAVLAGSQPALF) and 727–747 (AIIFVGAGIVTAPIYILQHYF). The N-linked (GlcNAc...) asparagine glycan is linked to asparagine 780. The next 3 membrane-spanning stretches (helical) occupy residues 807 to 824 (IVQNLSLTITALALAFFY), 830 to 850 (AVVTACFPLLIAASLTEQLFL), and 915 to 935 (LSQCLAFCSYALGLWYISVLI). An N-linked (GlcNAc...) asparagine glycan is attached at asparagine 938. Residues 949-969 (FMVLLVTAYSVAETLALTPDI) form a helical membrane-spanning segment. In terms of domain architecture, ABC transporter 2 spans 1006 to 1242 (IEFRNVSFAY…SDGFYKKLTS (237 aa)). Asparagine 1010 is a glycosylation site (N-linked (GlcNAc...) asparagine). Residue 1041-1048 (GPSGSGKS) participates in ATP binding. N-linked (GlcNAc...) asparagine glycosylation is present at asparagine 1108.

It belongs to the ABC transporter superfamily. ABCB family. Multidrug resistance exporter (TC 3.A.1.201) subfamily.

Its subcellular location is the membrane. This chain is ABC transporter B family member 14 (ABCB14), found in Arabidopsis thaliana (Mouse-ear cress).